Consider the following 131-residue polypeptide: Small ribosomal subunit protein uS8 (131 aa).

Belongs to the universal ribosomal protein uS8 family. In terms of assembly, part of the 30S ribosomal subunit. Contacts proteins S5 and S12.

One of the primary rRNA binding proteins, it binds directly to 16S rRNA central domain where it helps coordinate assembly of the platform of the 30S subunit. The sequence is that of Small ribosomal subunit protein uS8 from Burkholderia ambifaria (strain MC40-6).